We begin with the raw amino-acid sequence, 157 residues long: Alanyl-tRNA editing protein AlaX-S (157 aa).

Positions 9, 13, 116, and 120 each coordinate Zn(2+).

This sequence belongs to the class-II aminoacyl-tRNA synthetase family. Editing domain AlaX-S subfamily. In terms of assembly, monomer and homodimer; the dimer is less active in tRNA editing and does not have a zinc ion associated with it. Another report shows only a monomeric form. It depends on Zn(2+) as a cofactor.

Its subcellular location is the cytoplasm. Functions in trans to edit the amino acid moiety from mischarged charged Ser-tRNA(Ala). Has little activity against Gly-tRNA(Ala). In Pyrococcus horikoshii (strain ATCC 700860 / DSM 12428 / JCM 9974 / NBRC 100139 / OT-3), this protein is Alanyl-tRNA editing protein AlaX-S (alaXS).